The following is a 151-amino-acid chain: Calcium-binding protein SPEC 2C (151 aa).

EF-hand domains follow at residues 10–45, 46–78, 81–116, and 118–151; these read EQRK…IEIE, LTQE…KAEQ, GKGA…CTDP, and MTKE…QSSY. Residues aspartate 23, aspartate 25, aspartate 27, lysine 29, glutamate 34, aspartate 59, aspartate 61, serine 63, glutamate 70, aspartate 94, aspartate 96, serine 98, serine 100, glutamate 105, aspartate 131, aspartate 135, glutamate 137, and glutamate 142 each coordinate Ca(2+).

As to expression, found in cell lineages giving rise to the aboral ectoderm, a squamous epithelium covering the surface of the late stage embryo and larva.

Its function is as follows. Calcium-binding protein involved in larval development and metamorphosis. Likely to function as calcium buffers mediating the transport of calcium from the sea water to the blastocoel where calcium is required for skeleton formation. This Strongylocentrotus purpuratus (Purple sea urchin) protein is Calcium-binding protein SPEC 2C (SPEC2C).